The chain runs to 118 residues: p-cumate 2,3-dioxygenase system, ferredoxin component (118 aa).

The region spanning 14-111 (VGLCATDDVA…VTVEGGQIFV (98 aa)) is the Rieske domain. 4 residues coordinate [2Fe-2S] cluster: cysteine 54, histidine 56, cysteine 74, and histidine 77.

The protein belongs to the bacterial ring-hydroxylating dioxygenase ferredoxin component family. As to quaternary structure, the p-cumate 2,3-dioxygenase multicomponent enzyme system is composed of an electron transfer component and a dioxygenase component (iron sulfur protein (ISP)). The electron transfer component is composed of a ferredoxin reductase (CmtAa) and a ferredoxin (CmtAd), and the dioxygenase component is formed of a large alpha subunit (CmtAb) and a small beta subunit (CmtAc). Requires [2Fe-2S] cluster as cofactor.

Its pathway is aromatic compound metabolism; p-cumate degradation; acetaldehyde and pyruvate from p-cumate. Component of the p-cumate 2,3-dioxygenase multicomponent enzyme system which catalyzes the incorporation of both atoms of molecular oxygen into p-cumate to form cis-2,3-dihydroxy-2,3-dihydro-p-cumate. Functions as an intermediate electron transfer protein via a specific interaction with iron sulfur protein components (ISP)(CmtAb and CmtAc). This Pseudomonas putida (Arthrobacter siderocapsulatus) protein is p-cumate 2,3-dioxygenase system, ferredoxin component.